Here is a 491-residue protein sequence, read N- to C-terminus: Ketol-acid reductoisomerase (NADP(+)) (491 aa).

Positions 15 to 208 constitute a KARI N-terminal Rossmann domain; the sequence is AQLGKCRFMG…GGHRAGVLES (194 aa). NADP(+) contacts are provided by residues 45-48, Arg68, Arg76, Ser78, and 108-110; these read CGAQ and DKQ. The active site involves His132. An NADP(+)-binding site is contributed by Gly158. KARI C-terminal knotted domains follow at residues 209 to 344 and 345 to 484; these read SFVA…TAPQ and YEGK…MTDM. Residues Asp217, Glu221, Glu389, and Glu393 each contribute to the Mg(2+) site. Ser414 serves as a coordination point for substrate.

This sequence belongs to the ketol-acid reductoisomerase family. Requires Mg(2+) as cofactor.

It carries out the reaction (2R)-2,3-dihydroxy-3-methylbutanoate + NADP(+) = (2S)-2-acetolactate + NADPH + H(+). The enzyme catalyses (2R,3R)-2,3-dihydroxy-3-methylpentanoate + NADP(+) = (S)-2-ethyl-2-hydroxy-3-oxobutanoate + NADPH + H(+). It functions in the pathway amino-acid biosynthesis; L-isoleucine biosynthesis; L-isoleucine from 2-oxobutanoate: step 2/4. It participates in amino-acid biosynthesis; L-valine biosynthesis; L-valine from pyruvate: step 2/4. Functionally, involved in the biosynthesis of branched-chain amino acids (BCAA). Catalyzes an alkyl-migration followed by a ketol-acid reduction of (S)-2-acetolactate (S2AL) to yield (R)-2,3-dihydroxy-isovalerate. In the isomerase reaction, S2AL is rearranged via a Mg-dependent methyl migration to produce 3-hydroxy-3-methyl-2-ketobutyrate (HMKB). In the reductase reaction, this 2-ketoacid undergoes a metal-dependent reduction by NADPH to yield (R)-2,3-dihydroxy-isovalerate. This is Ketol-acid reductoisomerase (NADP(+)) from Escherichia coli O6:K15:H31 (strain 536 / UPEC).